Reading from the N-terminus, the 296-residue chain is 4-hydroxybenzoate octaprenyltransferase (296 aa).

The next 8 membrane-spanning stretches (helical) occupy residues 29-49, 55-75, 102-122, 146-166, 169-189, 219-239, 241-261, and 275-295; these read IGIY…ADGV, LLIF…INDF, AWIT…LTNA, YYPQ…AFTA, GELP…TVAY, LIIG…GSRF, LGLY…WEAW, and FLHN…DYAL.

Belongs to the UbiA prenyltransferase family. Requires Mg(2+) as cofactor.

It localises to the cell inner membrane. It carries out the reaction all-trans-octaprenyl diphosphate + 4-hydroxybenzoate = 4-hydroxy-3-(all-trans-octaprenyl)benzoate + diphosphate. It participates in cofactor biosynthesis; ubiquinone biosynthesis. Functionally, catalyzes the prenylation of para-hydroxybenzoate (PHB) with an all-trans polyprenyl group. Mediates the second step in the final reaction sequence of ubiquinone-8 (UQ-8) biosynthesis, which is the condensation of the polyisoprenoid side chain with PHB, generating the first membrane-bound Q intermediate 3-octaprenyl-4-hydroxybenzoate. The protein is 4-hydroxybenzoate octaprenyltransferase of Pseudomonas aeruginosa (strain UCBPP-PA14).